The primary structure comprises 563 residues: (-)-germacrene D synthase (563 aa).

The stretch at 44–71 (TEITAAEKEELEKQKEKVKNLLDQTPND) forms a coiled coil. Mn(2+) contacts are provided by Asp314 and Asp318. A DDXXD motif motif is present at residues 314–318 (DDIYD). 2 homodimerization regions span residues 320-326 (YGSLDEL) and 392-429 (EAEW…VGME). Positions 459 and 467 each coordinate Mn(2+).

Belongs to the terpene synthase family. Homodimer. Requires Mn(2+) as cofactor. Mg(2+) is required as a cofactor. Expressed in peltate glandular trichomes. Present at low levels in flowers, leaves and stems.

The enzyme catalyses (2E,6E)-farnesyl diphosphate = (-)-germacrene D + diphosphate. It participates in secondary metabolite biosynthesis; terpenoid biosynthesis. Functionally, involved in the biosynthesis of phenolic sesquiterpenes natural products. Sesquiterpene synthase that catalyzes mainly the formation of (-)-germacrene D and minor amounts of other sesquiterpenes (e.g. bicyclo-germacrene) from farnesyl diphosphate (FPP). Also triggers moderate amounts formation of myrcene, limonene, terpinolene and linalool in the presence of geranyl diphosphate (GPP). The polypeptide is (-)-germacrene D synthase (Origanum vulgare (Wild marjoram)).